The following is a 394-amino-acid chain: Myb-related protein 2 (394 aa).

Residues 42-102 (TDAKPRLKWT…HLQKYRLSKN (61 aa)) enclose the HTH myb-type domain. A DNA-binding region (H-T-H motif) is located at residues 73 to 98 (PKTIMKVMGIPGLTLYHLKSHLQKYR). Residues 148 to 168 (GEALQMQIEVQRRLHEQLEVQ) are coiled coil. Residues 161–166 (LHEQLE) carry the LHEQLE motif. The segment at 338–363 (LHGHKSQHQQGNNEDHKLETRNRKGM) is disordered. Residues 350–363 (NEDHKLETRNRKGM) are compositionally biased toward basic and acidic residues.

It belongs to the MYB-CC family. As to quaternary structure, isoform 1: Homodimer. Isoform 3: Does not form homodimer. As to expression, expressed in phloem and/or cambium.

Its subcellular location is the nucleus. Functionally, transcriptional activator that may activate the transcription of specific genes involved in nitrogen uptake or assimilation. Acts redundantly with MYR1 as a repressor of flowering and organ elongation under decreased light intensity. Represses gibberellic acid (GA)-dependent responses and affects levels of bioactive GA. The sequence is that of Myb-related protein 2 from Arabidopsis thaliana (Mouse-ear cress).